Here is a 527-residue protein sequence, read N- to C-terminus: Probable malate:quinone oxidoreductase (527 aa).

Belongs to the MQO family. FAD serves as cofactor.

The enzyme catalyses (S)-malate + a quinone = a quinol + oxaloacetate. It functions in the pathway carbohydrate metabolism; tricarboxylic acid cycle; oxaloacetate from (S)-malate (quinone route): step 1/1. This chain is Probable malate:quinone oxidoreductase, found in Pectobacterium carotovorum subsp. carotovorum (strain PC1).